The primary structure comprises 355 residues: Chemerin-like receptor 2 (355 aa).

The Extracellular portion of the chain corresponds to 1–41; sequence MEDLEETLFEEFENYSYALDYYSLESDLEEKVQLGVVHWVS. Asn-14 carries N-linked (GlcNAc...) asparagine glycosylation. A helical transmembrane segment spans residues 42–62; sequence LVLYCLSFVLGIPGNAIVIWF. The Cytoplasmic portion of the chain corresponds to 63–73; the sequence is TGFKWKRTVST. The chain crosses the membrane as a helical span at residues 74 to 94; it reads LWFLNLAIADFIFLLFLPLYI. Residues 95–112 lie on the Extracellular side of the membrane; it reads SYVVMNFHWPFGIWLCKA. Residues Cys-110 and Cys-187 are joined by a disulfide bond. The chain crosses the membrane as a helical span at residues 113–133; it reads NSFTAQLNMFASVFFLTVISL. The Cytoplasmic segment spans residues 134 to 154; that stretch reads DHYIHLIHPVLSHRHRTLKNS. A helical transmembrane segment spans residues 155–175; the sequence is LIVIIFIWLLASLIGGPALYF. Residues 176 to 210 are Extracellular-facing; the sequence is RDTVEFNNHTLCYNNFQKHDPDLTVIRHHVLTWVK. A helical membrane pass occupies residues 211–231; sequence YIVGYLFPLLTMSICYLCLIL. The Cytoplasmic portion of the chain corresponds to 232 to 247; the sequence is KVKKRSILISSRHFWT. Residues 248–268 form a helical membrane-spanning segment; that stretch reads ILAVVVAFVVCWTPYHLFSIW. The Extracellular portion of the chain corresponds to 269–286; it reads ELTIHHNSYSHHVMQAGI. A helical transmembrane segment spans residues 287 to 307; the sequence is PLSTGLAFLNSCLNPILYVLI. Residues 308 to 355 are Cytoplasmic-facing; sequence SKKFQARFRSSVAEILKYTLWEVSCSGTVSEQLRNSETKNLCLLETAQ.

It belongs to the chemokine-like receptor (CMKLR) family.

It is found in the cell membrane. Functionally, receptor for chemoattractant adipokine chemerin/RARRES2 suggesting a role for this receptor in the regulation of inflammation and energy homesotasis. Signals mainly via beta-arrestin pathway. Binding of RARRES2 activates weakly G proteins, calcium mobilization and MAPK1/MAPK3 (ERK1/2) phosphorylation too. Acts also as a receptor for TAFA1, mediates its effects on neuronal stem-cell proliferation and differentiation via the activation of ROCK/ERK and ROCK/STAT3 signaling pathway. This chain is Chemerin-like receptor 2 (CMKLR2), found in Macaca fascicularis (Crab-eating macaque).